The following is a 184-amino-acid chain: Adenine phosphoribosyltransferase 2 (184 aa).

Belongs to the purine/pyrimidine phosphoribosyltransferase family. In terms of assembly, homodimer.

It is found in the cytoplasm. It carries out the reaction AMP + diphosphate = 5-phospho-alpha-D-ribose 1-diphosphate + adenine. The protein operates within purine metabolism; AMP biosynthesis via salvage pathway; AMP from adenine: step 1/1. Its function is as follows. Catalyzes a salvage reaction resulting in the formation of AMP, that is energically less costly than de novo synthesis. The sequence is that of Adenine phosphoribosyltransferase 2 from Rhizobium etli (strain ATCC 51251 / DSM 11541 / JCM 21823 / NBRC 15573 / CFN 42).